A 660-amino-acid polypeptide reads, in one-letter code: Translation factor GUF1, mitochondrial (660 aa).

The N-terminal 42 residues, 1-42, are a transit peptide targeting the mitochondrion; the sequence is MRSCVRTASSVLQSWRAHTVLRNGCPLPSRTLERLPRLARSY. Residues 62-242 enclose the tr-type G domain; sequence ERYRNFCIVA…AVVEKIPAPV (181 aa). GTP contacts are provided by residues 71–78, 135–139, and 189–192; these read AHVDHGKS, DTPGH, and NKVD.

This sequence belongs to the TRAFAC class translation factor GTPase superfamily. Classic translation factor GTPase family. LepA subfamily.

It is found in the mitochondrion inner membrane. It carries out the reaction GTP + H2O = GDP + phosphate + H(+). Functionally, promotes mitochondrial protein synthesis. May act as a fidelity factor of the translation reaction, by catalyzing a one-codon backward translocation of tRNAs on improperly translocated ribosomes. Binds to mitochondrial ribosomes in a GTP-dependent manner. This is Translation factor GUF1, mitochondrial from Phaeosphaeria nodorum (strain SN15 / ATCC MYA-4574 / FGSC 10173) (Glume blotch fungus).